The following is a 218-amino-acid chain: Ribose-5-phosphate isomerase A (218 aa).

Residues 28 to 31, 81 to 84, and 94 to 97 each bind substrate; these read TGST, DSAD, and KGKG. E103 functions as the Proton acceptor in the catalytic mechanism. K121 provides a ligand contact to substrate.

This sequence belongs to the ribose 5-phosphate isomerase family. As to quaternary structure, homodimer.

It carries out the reaction aldehydo-D-ribose 5-phosphate = D-ribulose 5-phosphate. It participates in carbohydrate degradation; pentose phosphate pathway; D-ribose 5-phosphate from D-ribulose 5-phosphate (non-oxidative stage): step 1/1. Functionally, catalyzes the reversible conversion of ribose-5-phosphate to ribulose 5-phosphate. The polypeptide is Ribose-5-phosphate isomerase A (Blochmanniella pennsylvanica (strain BPEN)).